A 160-amino-acid polypeptide reads, in one-letter code: SsrA-binding protein (160 aa).

The protein belongs to the SmpB family.

Its subcellular location is the cytoplasm. Its function is as follows. Required for rescue of stalled ribosomes mediated by trans-translation. Binds to transfer-messenger RNA (tmRNA), required for stable association of tmRNA with ribosomes. tmRNA and SmpB together mimic tRNA shape, replacing the anticodon stem-loop with SmpB. tmRNA is encoded by the ssrA gene; the 2 termini fold to resemble tRNA(Ala) and it encodes a 'tag peptide', a short internal open reading frame. During trans-translation Ala-aminoacylated tmRNA acts like a tRNA, entering the A-site of stalled ribosomes, displacing the stalled mRNA. The ribosome then switches to translate the ORF on the tmRNA; the nascent peptide is terminated with the 'tag peptide' encoded by the tmRNA and targeted for degradation. The ribosome is freed to recommence translation, which seems to be the essential function of trans-translation. In Proteus mirabilis (strain HI4320), this protein is SsrA-binding protein.